We begin with the raw amino-acid sequence, 103 residues long: Urease subunit beta (103 aa).

Belongs to the urease beta subunit family. In terms of assembly, heterotrimer of UreA (gamma), UreB (beta) and UreC (alpha) subunits. Three heterotrimers associate to form the active enzyme.

The protein resides in the cytoplasm. The catalysed reaction is urea + 2 H2O + H(+) = hydrogencarbonate + 2 NH4(+). Its pathway is nitrogen metabolism; urea degradation; CO(2) and NH(3) from urea (urease route): step 1/1. This Streptomyces coelicolor (strain ATCC BAA-471 / A3(2) / M145) protein is Urease subunit beta.